A 429-amino-acid chain; its full sequence is Phosphomethylpyrimidine synthase (429 aa).

Residues Asn-66, Met-94, Tyr-123, His-162, 184–186, 225–228, and Glu-264 each bind substrate; these read SRG and DALR. Residue His-268 coordinates Zn(2+). Tyr-291 is a substrate binding site. His-332 is a binding site for Zn(2+). The [4Fe-4S] cluster site is built by Cys-408, Cys-411, and Cys-415.

It belongs to the ThiC family. [4Fe-4S] cluster serves as cofactor.

It carries out the reaction 5-amino-1-(5-phospho-beta-D-ribosyl)imidazole + S-adenosyl-L-methionine = 4-amino-2-methyl-5-(phosphooxymethyl)pyrimidine + CO + 5'-deoxyadenosine + formate + L-methionine + 3 H(+). It functions in the pathway cofactor biosynthesis; thiamine diphosphate biosynthesis. Catalyzes the synthesis of the hydroxymethylpyrimidine phosphate (HMP-P) moiety of thiamine from aminoimidazole ribotide (AIR) in a radical S-adenosyl-L-methionine (SAM)-dependent reaction. The sequence is that of Phosphomethylpyrimidine synthase from Sulfurisphaera tokodaii (strain DSM 16993 / JCM 10545 / NBRC 100140 / 7) (Sulfolobus tokodaii).